The following is a 539-amino-acid chain: Eukaryotic translation initiation factor 3 subunit L (539 aa).

In terms of domain architecture, PCI spans 306 to 514 (TFSDILLYIQ…IHIADTKVSH (209 aa)).

This sequence belongs to the eIF-3 subunit L family. Component of the eukaryotic translation initiation factor 3 (eIF-3) complex. The eIF-3 complex interacts with pix.

It is found in the cytoplasm. Component of the eukaryotic translation initiation factor 3 (eIF-3) complex, which is involved in protein synthesis of a specialized repertoire of mRNAs and, together with other initiation factors, stimulates binding of mRNA and methionyl-tRNAi to the 40S ribosome. The eIF-3 complex specifically targets and initiates translation of a subset of mRNAs involved in cell proliferation. The sequence is that of Eukaryotic translation initiation factor 3 subunit L from Drosophila ananassae (Fruit fly).